An 871-amino-acid chain; its full sequence is Isoleucine--tRNA ligase (871 aa).

The 'HIGH' region motif lies at 57 to 67 (PYANGNLHMGH). Glu-554 serves as a coordination point for L-isoleucyl-5'-AMP. A 'KMSKS' region motif is present at residues 595–599 (KMSKS). Lys-598 contacts ATP.

This sequence belongs to the class-I aminoacyl-tRNA synthetase family. IleS type 1 subfamily. Monomer.

It localises to the cytoplasm. The catalysed reaction is tRNA(Ile) + L-isoleucine + ATP = L-isoleucyl-tRNA(Ile) + AMP + diphosphate. Functionally, catalyzes the attachment of isoleucine to tRNA(Ile). As IleRS can inadvertently accommodate and process structurally similar amino acids such as valine, to avoid such errors it has two additional distinct tRNA(Ile)-dependent editing activities. One activity is designated as 'pretransfer' editing and involves the hydrolysis of activated Val-AMP. The other activity is designated 'posttransfer' editing and involves deacylation of mischarged Val-tRNA(Ile). The chain is Isoleucine--tRNA ligase from Staphylococcus epidermidis.